Consider the following 498-residue polypeptide: ATP synthase subunit beta, chloroplastic (498 aa).

ATP is bound at residue G172–T179.

The protein belongs to the ATPase alpha/beta chains family. F-type ATPases have 2 components, CF(1) - the catalytic core - and CF(0) - the membrane proton channel. CF(1) has five subunits: alpha(3), beta(3), gamma(1), delta(1), epsilon(1). CF(0) has four main subunits: a(1), b(1), b'(1) and c(9-12).

It is found in the plastid. Its subcellular location is the chloroplast thylakoid membrane. The catalysed reaction is ATP + H2O + 4 H(+)(in) = ADP + phosphate + 5 H(+)(out). In terms of biological role, produces ATP from ADP in the presence of a proton gradient across the membrane. The catalytic sites are hosted primarily by the beta subunits. The polypeptide is ATP synthase subunit beta, chloroplastic (Canella winterana (Wild cinnamon)).